The chain runs to 654 residues: Protein fem-1 homolog A-A (654 aa).

ANK repeat units lie at residues 2 to 31 (DLHT…REEL), 40 to 70 (GGGT…SVEA), 82 to 111 (EGAP…SVNR), 115 to 145 (TNST…DLEV), 149 to 178 (HGHT…QVNR), 182 to 211 (KGNT…RMER), and 214 to 243 (YGMT…GHEQ). The residue at position 108 (S108) is a Phosphoserine. The disordered stretch occupies residues 242–265 (EQLSGTELPGEGSSQVAGNHCSTP). Over residues 253–263 (GSSQVAGNHCS) the composition is skewed to polar residues. TPR repeat units lie at residues 283-317 (VEAL…RHQG) and 375-408 (SYYI…QQNN). ANK repeat units follow at residues 519–561 (NGFT…DPDS) and 565–594 (DNNT…HMDA). Phosphoserine is present on S608.

This sequence belongs to the fem-1 family. In terms of assembly, component of a CRL2 E3 ubiquitin-protein ligase complex, also named ECS (Elongin BC-CUL2/5-SOCS-box protein) complex, composed of CUL2, Elongin BC (ELOB and ELOC), RBX1 and substrate-specific adapter FEM1A. Interacts with PTGER4. Interacts with NFKB1; the interaction is direct. In terms of processing, phosphorylated; highly phosphorylated in myoblasts and myotubes. Phosphorylation at Ser-108 and Ser-608 promote PGE2-EP4-mediated inhibition of inflammation. Dephosphorylated by protein phosphatase 2A (PP2A). Preferentially expressed in cardiac muscle, brain and liver (at protein level). Also expressed in skeletal muscle.

It localises to the mitochondrion. The protein resides in the cytoplasm. It functions in the pathway protein modification; protein ubiquitination. Substrate-recognition component of a Cul2-RING (CRL2) E3 ubiquitin-protein ligase complex of the DesCEND (destruction via C-end degrons) pathway, which recognizes a C-degron located at the extreme C terminus of target proteins, leading to their ubiquitination and degradation. The C-degron recognized by the DesCEND pathway is usually a motif of less than ten residues and can be present in full-length proteins, truncated proteins or proteolytically cleaved forms. The CRL2(FEM1A) complex specifically recognizes proteins with an arginine at the C-terminus: recognizes and binds proteins ending with -Lys/Arg-Xaa-Arg and -Lys/Arg-Xaa-Xaa-Arg C-degrons, such as SIL1 or OR51B2, leading to their ubiquitination and degradation. Involved in PGE2-EP4-mediated inhibition of inflammation of macrophages via interaction with NFKB1 and PTGER4. Promotes inflammation in brain microglia through MAP2K4/MKK4-mediated signaling. This is Protein fem-1 homolog A-A from Mus musculus (Mouse).